The following is an 85-amino-acid chain: uncharacterized protein (85 aa).

This is an uncharacterized protein from Mycobacterium tuberculosis (strain CDC 1551 / Oshkosh).